Here is a 269-residue protein sequence, read N- to C-terminus: 4-chlorobenzoyl coenzyme A dehalogenase (269 aa).

Residues arginine 24 and 62–67 contribute to the substrate site; that span reads AGFYLR. Residue histidine 90 is the Proton acceptor of the active site. Glycine 114 serves as a coordination point for substrate. Residue aspartate 145 is the Nucleophile of the active site. Arginine 257 serves as a coordination point for substrate.

The protein belongs to the enoyl-CoA hydratase/isomerase family. Homotetramer. Homotetramer, homooctamer and larger multimers. Homotrimer.

It carries out the reaction 4-chlorobenzoyl-CoA + H2O = 4-hydroxybenzoyl-CoA + chloride + H(+). It participates in xenobiotic degradation; 4-chlorobenzoate degradation; 4-hydroxybenzoate from 4-chlorobenzoate: step 2/3. Its activity is regulated as follows. Inactivated by 1 mM Ag(+) and by 5 mM Cu(2+). Partially inhibited by 5 mM Zn(2+), Mn(2+), Co(2+), Fe(2+) and Ni(2+). Unaffected by 10 mM Na(+), K(+) and Li(+) and by 0.5 mM Mg(2+), Mn(2+), Fe(2+), Ca(2+), Co(2+) and Zn(2+). Inhibited by the sulfhydryl blocking agent 5,5'-dithio-bis-(2-nitrobenzoate), SDS and N-bromosuccinimide. Unaffected by sodium azide and EDTA. Inactivated following treatment with diethyl pyrocarbonate; this inactivation is reversible by treatment with hydroxylamine. Its function is as follows. Dehalogenates 4-chlorobenzoyl-CoA, 4-iodobenzoyl-CoA and 4-bromobenzoyl-CoA, but not 4-fluorobenzoyl-CoA. Inactive towards crotonyl-CoA, alpha-methylcrotonyl-CoA and beta-methylcrotonyl-CoA. The chain is 4-chlorobenzoyl coenzyme A dehalogenase from Pseudomonas sp. (strain CBS-3).